The following is an 889-amino-acid chain: DNA mismatch repair protein MutS (889 aa).

The span at 1-17 (MPKTNSSAASTNANPSS) shows a compositional bias: low complexity. The tract at residues 1–20 (MPKTNSSAASTNANPSSLQQ) is disordered. ATP is bound at residue 640–647 (GPNMGGKS).

Belongs to the DNA mismatch repair MutS family.

This protein is involved in the repair of mismatches in DNA. It is possible that it carries out the mismatch recognition step. This protein has a weak ATPase activity. The protein is DNA mismatch repair protein MutS of Pseudoalteromonas atlantica (strain T6c / ATCC BAA-1087).